The sequence spans 281 residues: MQVIGRGGANILIDYGDPTWLWRCCIRWPDLLSSNNSYTIKNISYIKDYVEPLLHGLLCPMYLIDVDIEAIRPILSDFILNLDDKVVKVIKIKNLTNNTSNLILNNHFLKSYCSQNLQTVILELKPKWLYYDTDYCRNCTHNAFKGRGTKYCYNQLLMNPAHLELIFGECNIFPVKFKDAMHEYLRNDNNIFKILYDLQKKLTKNTTPISDIKSINDVNDEHLLLMTLRDVTCFIEWNSAENALHVNIIDVDLKPKEKWTHWTKTYSQLTSSQKIYHTSNK.

An EXKPK motif motif is present at residues 123 to 127; sequence ELKPK.

Belongs to the IPK1 type 1 family.

Its subcellular location is the nucleus. The catalysed reaction is 1D-myo-inositol 1,3,4,5,6-pentakisphosphate + ATP = 1D-myo-inositol hexakisphosphate + ADP + H(+). Functionally, has kinase activity and phosphorylates inositol-1,3,4,5,6-pentakisphosphate (Ins(1,3,4,5,6)P5) to produce 1,2,3,4,5,6-hexakisphosphate (InsP6), also known as phytate. In Saccharomyces cerevisiae (strain ATCC 204508 / S288c) (Baker's yeast), this protein is Inositol-pentakisphosphate 2-kinase (IPK1).